A 2629-amino-acid polypeptide reads, in one-letter code: MESADALMEEQKLMAEAKYRNYMTNIDKALRNFEYSSEWADLISALGKLSKAISSNTQYQVIPRRLKIAKRLAQCMHPALPSGVHLKALETYSVIFSKTGPERLATEFIYSAGLFPLLGYAAMNVRPALLAIYETYFVPLGDKLRPALSGFLNGVLPGYDCGLDHFERISALLKQVCNAVNPMHFYTVLWESVANNAAIRLPAITYLLEHFNKRLDMQEQIYVMGHNREIMMSALCACLNDSLILVQRNTLEFLLLGFPMHTALLAEDDLVKLVTNGLNTILRRDMSLNRRLFSWLLGSEVAKNSPTYDTLSLDASATPLDEPPEPYFVKHSRHILIRALITTLRLSLECAPMDLKPYRIMLSLLDKAEIGSAVLDYVLHDIIRAMYISSGNPEALKSANLLFATFDPAYIWSYMTNMFERACHQANSSDKQDKLLPQASAEGGDKFACEVGSGDPCVLEICVLTEFLLETVSLEMYTETTRVYLPKVFLAITQLLSLHMDRVTSSEITASLKLCMKIVSRVQPMITSPIKLNKLMEQQCAGSSSDEKITVNAAAAIDSANKGVPGTHTQGSSLEKSKSDSRLNQFAENSLQSADPNDEDLIRRSASNQSVGRQSPSKKKAKSISRLSELDKDISASDTGQQSSSDLDTPRSIKKLKAKAKVPFIRSPKKQRPKDIVLVQSAAVVDSAGNVHDAEEPKSAPPDPQSPQFYLDDESQATQQRGYSILEKCIRQYEIFFEVYVARKLLQIESDGMSESSVKVQLQRSTSIHSSSHTSSLFLVEQVLEYECPIRESQIERLFNLLRVDKVPRSKQLQRLLNHSLPLLASASELSSDSEATEAPERQTQSLLIDTQTQRGVQQLAELQLSLSMRGAVKLAASLLVEMSTFPNCNKHIVLDRSEPELPNWLKVLCLVACFAQSDKELQVSAITTLFDLISLLRSQIEHTTSPGVTFVVMLPLLKFGHVSYMEQQTRVFQLVSSILWDYLGASCTDPAQTVALLHQLHSCLESGLVETVIGNRMQAQHLLQIQPIPGVGRTALRSFQLERLGDAQLLCPTESTERLRESQARSFKKFELLWHLGRDKQTSRGFEKTLLKVLDTLALPHYMSERTFVTNWLQASLLRGDLARLTKPLYKILLSANSKRVGIVHMQQLYRESAEAEGDTAPAFERDVYAISSEQGNVKYHHMETTSGAKKKSPIRNLPKKIFGVTLSGGKTNKTSNFVSDKTALATEAAQDVNTIGLIINPLENATDFDDETDLEEPRIEIPHKETPLEQKLACAMDESDQPSAQEQPPPPSQQQQDQSSHFDQDITDNSDSSDFESDSELRETSLEKEDSITVSSSAGVSDDVKRFVGDCERVTEALTQHEKIKSRKTYRLTREKTPGENSLNSVATDQTEHSLADMHADALPADEYFREDKKLGKRKKLLTSSDKKRLSCISKTSTDSNLSNSCSQAEPAPEGDPQGEEEATAATDSTINVEDKRRNLSLETSKLQPDWQKALEKGKQNVEILRQNAAAAAAAEEQTSLRSSMKSSSSLADAAHLYHNHLLLYLAIYDTRQTLYALQTLRNIICCDKRTFLCLSITTSFSSASLKQLLVRHRKSISGKGFDGSVGNSEYAQGYRGCMQLELLVTLCLFYARGYFQRESLDAQRQSPTLQDIVNNRRIQLESIELLTLICSELIEIVKGMGRGLACYIADLLARAKLQKVMLHCLNSSVCSYGRRAPTGSYAEQVLSFNDPQDDQLHADCFQLQLLRLLLSVIRLEHEVHQLRQDTPPAAGDDSTGNTSPTRLAEGAAANVKYLPNCLISQQPMFLAAVLGALQQERLRHLHRNWTDLVTSSLNCFTFGSLTNIVISVVHQLCNNLDRMARLGLQQQRHFPPDYVLSQLEALTILCHYCLLDNTQQTALSHLFNQAYPQTSSSAQSSSTSQLLNSFVHSFLSANESSTGTSAPAPRNPQLQAARNAVLSHLPRIMSSVAAIWDSELGQLRPVRQQLMEFLSPVSLHHGCNFLAAVAVTWQQRGSSNASNGSGLSISDQFQRNSTLQACPGQLSLVSLVSSIRVMPMDSFVMTLHQVVRSPPPIHRPPAHLSIEVSALELFYFYMKSAPGTQLADAWSSLLALIRDGLNLSPPAQFALLMLLNEFVQRCPQMPFQDKKEVRELHDVTSRLVDSLSGVAGSCLEQTTWLRRNLAVKEDTDGLAKDNSIGGGGGIQQYSLQAQSVLATILSNLLDVAYGSQEKDKVVNIVTPLLYNITPYLKNHTARNVPFFYACSALLASLSGYQYTRKAWRKDMLDLLLDNSFFQMHISCLPFWRMIMDSLMTYDNTTFRELMTRVSLSQAGSLNIFTSREQEFEQRGMLLKRLAFVIYCSEFDQHNKYMPDIQEQLANSLRLVPMGPSVQAAVFLCFRVLLLRMSPDHVTSLWPIIIAEMVQVFLQMEQELKSESEERSQQMRLPSSIDVSWSNNSGASNGINAQTPMQHWRSVQLEACKLLELGCVLPATKLPHFQMYRWAFVGTEFDVHEEEVGLPNGSLENLATLPTALYVPHVRRVARLMDMKYTSQSPLLQRPSNRHLMLNFQQLQSLQELYAFFSTLGISCPQPRNFADTERDVANCLEEIEDVLANDFLEKLPSLTTPR.

7 disordered regions span residues 561 to 584 (NKGV…SRLN), 605 to 652 (SASN…TPRS), 688 to 710 (AGNV…PQFY), 1278 to 1340 (MDES…SSSA), 1371 to 1395 (TYRL…QTEH), 1435 to 1471 (ISKT…ATDS), and 1766 to 1785 (RQDT…SPTR). 2 stretches are compositionally biased toward polar residues: residues 605–615 (SASNQSVGRQS) and 636–647 (ASDTGQQSSSDL). Residues 1307 to 1320 (DITDNSDSSDFESD) show a composition bias toward acidic residues. Residues 1321-1333 (SELRETSLEKEDS) show a composition bias toward basic and acidic residues. Polar residues-rich tracts occupy residues 1381–1391 (GENSLNSVATD) and 1435–1450 (ISKT…SCSQ).

The protein belongs to the DOP1 family.

It localises to the golgi apparatus membrane. In terms of biological role, may be involved in protein traffic between late Golgi and early endosomes. In Drosophila pseudoobscura pseudoobscura (Fruit fly), this protein is Protein DOP1 homolog.